The sequence spans 200 residues: dTTP/UTP pyrophosphatase (200 aa).

The active-site Proton acceptor is Asp73.

It belongs to the Maf family. YhdE subfamily. It depends on a divalent metal cation as a cofactor.

Its subcellular location is the cytoplasm. It carries out the reaction dTTP + H2O = dTMP + diphosphate + H(+). It catalyses the reaction UTP + H2O = UMP + diphosphate + H(+). Functionally, nucleoside triphosphate pyrophosphatase that hydrolyzes dTTP and UTP. May have a dual role in cell division arrest and in preventing the incorporation of modified nucleotides into cellular nucleic acids. The polypeptide is dTTP/UTP pyrophosphatase (Chromohalobacter salexigens (strain ATCC BAA-138 / DSM 3043 / CIP 106854 / NCIMB 13768 / 1H11)).